The primary structure comprises 106 residues: Iron-sulfur cluster assembly protein CyaY (106 aa).

It belongs to the frataxin family.

Its function is as follows. Involved in iron-sulfur (Fe-S) cluster assembly. May act as a regulator of Fe-S biogenesis. This is Iron-sulfur cluster assembly protein CyaY from Shigella flexneri serotype 5b (strain 8401).